Here is a 476-residue protein sequence, read N- to C-terminus: Aspartyl/glutamyl-tRNA(Asn/Gln) amidotransferase subunit B (476 aa).

Belongs to the GatB/GatE family. GatB subfamily. Heterotrimer of A, B and C subunits.

It catalyses the reaction L-glutamyl-tRNA(Gln) + L-glutamine + ATP + H2O = L-glutaminyl-tRNA(Gln) + L-glutamate + ADP + phosphate + H(+). The enzyme catalyses L-aspartyl-tRNA(Asn) + L-glutamine + ATP + H2O = L-asparaginyl-tRNA(Asn) + L-glutamate + ADP + phosphate + 2 H(+). In terms of biological role, allows the formation of correctly charged Asn-tRNA(Asn) or Gln-tRNA(Gln) through the transamidation of misacylated Asp-tRNA(Asn) or Glu-tRNA(Gln) in organisms which lack either or both of asparaginyl-tRNA or glutaminyl-tRNA synthetases. The reaction takes place in the presence of glutamine and ATP through an activated phospho-Asp-tRNA(Asn) or phospho-Glu-tRNA(Gln). The polypeptide is Aspartyl/glutamyl-tRNA(Asn/Gln) amidotransferase subunit B (Enterococcus faecalis (strain ATCC 700802 / V583)).